The sequence spans 502 residues: NAD(P)H-quinone oxidoreductase chain 4, chloroplastic (502 aa).

The next 14 membrane-spanning stretches (helical) occupy residues 4–24 (FPWL…IFFF), 37–57 (ICIC…HFQL), 87–107 (VGPI…AWPV), 113–130 (LFHF…GLFS), 134–154 (LLLF…LLSM), 167–187 (FILY…GMGL), 208–228 (ALEI…LPII), 242–262 (HYST…YGLV), 272–292 (AHSI…IYAA), 305–325 (IAYS…SITD), 330–350 (GAIL…FLAG), 374–396 (IFTM…GFAA), 416–436 (ILIT…SLSM), and 464–484 (LFVS…PDFV).

This sequence belongs to the complex I subunit 4 family.

Its subcellular location is the plastid. It localises to the chloroplast thylakoid membrane. It catalyses the reaction a plastoquinone + NADH + (n+1) H(+)(in) = a plastoquinol + NAD(+) + n H(+)(out). It carries out the reaction a plastoquinone + NADPH + (n+1) H(+)(in) = a plastoquinol + NADP(+) + n H(+)(out). This Ranunculus macranthus (Large buttercup) protein is NAD(P)H-quinone oxidoreductase chain 4, chloroplastic.